We begin with the raw amino-acid sequence, 262 residues long: NADP-dependent mannitol dehydrogenase (262 aa).

Residues isoleucine 23, aspartate 69, asparagine 96, and arginine 129 each contribute to the NADP(+) site. Serine 149 serves as the catalytic Proton donor. Positions 169, 173, 202, 204, and 206 each coordinate NADP(+). Tyrosine 169 (proton acceptor) is an active-site residue. Lysine 173 acts as the Lowers pKa of active site Tyr in catalysis.

Belongs to the short-chain dehydrogenases/reductases (SDR) family. In terms of assembly, homotetramer.

The enzyme catalyses D-mannitol + NADP(+) = D-fructose + NADPH + H(+). This chain is NADP-dependent mannitol dehydrogenase (mtdH), found in Agaricus bisporus (White button mushroom).